Here is a 172-residue protein sequence, read N- to C-terminus: SsrA-binding protein (172 aa).

The protein belongs to the SmpB family.

The protein localises to the cytoplasm. In terms of biological role, required for rescue of stalled ribosomes mediated by trans-translation. Binds to transfer-messenger RNA (tmRNA), required for stable association of tmRNA with ribosomes. tmRNA and SmpB together mimic tRNA shape, replacing the anticodon stem-loop with SmpB. tmRNA is encoded by the ssrA gene; the 2 termini fold to resemble tRNA(Ala) and it encodes a 'tag peptide', a short internal open reading frame. During trans-translation Ala-aminoacylated tmRNA acts like a tRNA, entering the A-site of stalled ribosomes, displacing the stalled mRNA. The ribosome then switches to translate the ORF on the tmRNA; the nascent peptide is terminated with the 'tag peptide' encoded by the tmRNA and targeted for degradation. The ribosome is freed to recommence translation, which seems to be the essential function of trans-translation. This Dehalococcoides mccartyi (strain ATCC BAA-2100 / JCM 16839 / KCTC 5957 / BAV1) protein is SsrA-binding protein.